The following is a 487-amino-acid chain: Benzaldehyde dehydrogenase [NAD(+)] (487 aa).

232–237 (GSTQVG) is an NAD(+) binding site. Active-site residues include Glu-254 and Cys-288.

This sequence belongs to the aldehyde dehydrogenase family. In terms of assembly, homotetramer.

The catalysed reaction is benzaldehyde + NAD(+) + H2O = benzoate + NADH + 2 H(+). This Pseudomonas putida (Arthrobacter siderocapsulatus) protein is Benzaldehyde dehydrogenase [NAD(+)] (xylC).